The following is a 140-amino-acid chain: Protein KRTCAP2 homolog (140 aa).

4 helical membrane-spanning segments follow: residues 11-31 (LLSS…LRFC), 40-60 (LNVL…LTCV), 74-94 (AKLV…AGIV), and 98-118 (CATT…RISI).

The protein belongs to the KRTCAP2 family. As to quaternary structure, component of the oligosaccharyltransferase (OST) complex.

The protein resides in the membrane. Functionally, subunit of the oligosaccharyl transferase (OST) complex that catalyzes the initial transfer of a defined glycan (Glc(3)Man(9)GlcNAc(2) in eukaryotes) from the lipid carrier dolichol-pyrophosphate to an asparagine residue within an Asn-X-Ser/Thr consensus motif in nascent polypeptide chains, the first step in protein N-glycosylation. N-glycosylation occurs cotranslationally and the complex associates with the Sec61 complex at the channel-forming translocon complex that mediates protein translocation across the endoplasmic reticulum (ER). All subunits are required for a maximal enzyme activity. The protein is Protein KRTCAP2 homolog of Drosophila pseudoobscura pseudoobscura (Fruit fly).